The chain runs to 457 residues: Exodeoxyribonuclease 7 large subunit (457 aa).

The protein belongs to the XseA family. As to quaternary structure, heterooligomer composed of large and small subunits.

Its subcellular location is the cytoplasm. It catalyses the reaction Exonucleolytic cleavage in either 5'- to 3'- or 3'- to 5'-direction to yield nucleoside 5'-phosphates.. Its function is as follows. Bidirectionally degrades single-stranded DNA into large acid-insoluble oligonucleotides, which are then degraded further into small acid-soluble oligonucleotides. In Escherichia coli O127:H6 (strain E2348/69 / EPEC), this protein is Exodeoxyribonuclease 7 large subunit.